Consider the following 317-residue polypeptide: ADP-L-glycero-D-manno-heptose-6-epimerase (317 aa).

Residues 10–11 (FI), 31–32 (DD), glutamine 38, lysine 53, 75–79 (QGACS), and asparagine 92 each bind NADP(+). Tyrosine 139 acts as the Proton acceptor in catalysis. Residue lysine 143 coordinates NADP(+). Asparagine 166 provides a ligand contact to substrate. NADP(+)-binding residues include valine 167 and lysine 175. Lysine 175 functions as the Proton acceptor in the catalytic mechanism. Residues glycine 177, histidine 184, 198 to 201 (FEGV), arginine 211, and tyrosine 275 each bind substrate.

Belongs to the NAD(P)-dependent epimerase/dehydratase family. HldD subfamily. Homopentamer. The cofactor is NADP(+).

It catalyses the reaction ADP-D-glycero-beta-D-manno-heptose = ADP-L-glycero-beta-D-manno-heptose. The protein operates within nucleotide-sugar biosynthesis; ADP-L-glycero-beta-D-manno-heptose biosynthesis; ADP-L-glycero-beta-D-manno-heptose from D-glycero-beta-D-manno-heptose 7-phosphate: step 4/4. Catalyzes the interconversion between ADP-D-glycero-beta-D-manno-heptose and ADP-L-glycero-beta-D-manno-heptose via an epimerization at carbon 6 of the heptose. This is ADP-L-glycero-D-manno-heptose-6-epimerase from Shewanella frigidimarina (strain NCIMB 400).